A 205-amino-acid polypeptide reads, in one-letter code: Ribosomal RNA small subunit methyltransferase G (205 aa).

Residues Gly76, Leu81, 127–128 (IE), and Arg140 contribute to the S-adenosyl-L-methionine site.

The protein belongs to the methyltransferase superfamily. RNA methyltransferase RsmG family.

It localises to the cytoplasm. The enzyme catalyses guanosine(527) in 16S rRNA + S-adenosyl-L-methionine = N(7)-methylguanosine(527) in 16S rRNA + S-adenosyl-L-homocysteine. Specifically methylates the N7 position of guanine in position 527 of 16S rRNA. This chain is Ribosomal RNA small subunit methyltransferase G, found in Francisella tularensis subsp. tularensis (strain FSC 198).